We begin with the raw amino-acid sequence, 127 residues long: UPF0325 protein VC_2264 (127 aa).

The protein belongs to the UPF0325 family.

The sequence is that of UPF0325 protein VC_2264 from Vibrio cholerae serotype O1 (strain ATCC 39315 / El Tor Inaba N16961).